The following is a 726-amino-acid chain: Dipeptidyl-peptidase 5 (726 aa).

Residues 1–19 (MAAAKWLIASLAFASSGLA) form the signal peptide. N96 and N252 each carry an N-linked (GlcNAc...) asparagine glycan. Residues 269–291 (AEPINKRNGPRTPQGIEGASSSP) are disordered. The Charge relay system role is filled by S558. N605 and N638 each carry an N-linked (GlcNAc...) asparagine glycan. Residues D641 and H673 each act as charge relay system in the active site. N699 carries an N-linked (GlcNAc...) asparagine glycan.

This sequence belongs to the peptidase S9C family.

Its subcellular location is the secreted. In Trichophyton schoenleinii, this protein is Dipeptidyl-peptidase 5 (DPPV).